A 137-amino-acid chain; its full sequence is Large ribosomal subunit protein uL16 (137 aa).

It belongs to the universal ribosomal protein uL16 family. As to quaternary structure, part of the 50S ribosomal subunit.

Functionally, binds 23S rRNA and is also seen to make contacts with the A and possibly P site tRNAs. This Nitratidesulfovibrio vulgaris (strain DSM 19637 / Miyazaki F) (Desulfovibrio vulgaris) protein is Large ribosomal subunit protein uL16.